The sequence spans 21 residues: Nigrocin-2HSa (21 aa).

Cysteines 15 and 21 form a disulfide.

In terms of tissue distribution, expressed by the skin glands.

The protein localises to the secreted. Has antibacterial activity against the Gram-positive bacterium S.aureus ATCC 25923 (MIC=56 uM) and the Gram-negative bacterium E.coli ATCC 25726 (MIC=28 uM). The sequence is that of Nigrocin-2HSa from Odorrana hosii (Hose's rock frog).